Here is a 134-residue protein sequence, read N- to C-terminus: D-ribose pyranase (134 aa).

The active-site Proton donor is the His20. Residues Asp28, His99, and 123–125 (YSN) contribute to the substrate site.

The protein belongs to the RbsD / FucU family. RbsD subfamily. As to quaternary structure, homodecamer.

The protein localises to the cytoplasm. The enzyme catalyses beta-D-ribopyranose = beta-D-ribofuranose. It participates in carbohydrate metabolism; D-ribose degradation; D-ribose 5-phosphate from beta-D-ribopyranose: step 1/2. Catalyzes the interconversion of beta-pyran and beta-furan forms of D-ribose. This Staphylococcus aureus (strain USA300) protein is D-ribose pyranase.